Here is a 541-residue protein sequence, read N- to C-terminus: ATP synthase subunit alpha (541 aa).

173-180 (GDRQTGKT) provides a ligand contact to ATP. The span at 517–527 (GIEPGVEEHES) shows a compositional bias: basic and acidic residues. Positions 517-541 (GIEPGVEEHESLGATAVNQETIVKK) are disordered. Positions 532 to 541 (AVNQETIVKK) are enriched in polar residues.

This sequence belongs to the ATPase alpha/beta chains family. In terms of assembly, F-type ATPases have 2 components, CF(1) - the catalytic core - and CF(0) - the membrane proton channel. CF(1) has five subunits: alpha(3), beta(3), gamma(1), delta(1), epsilon(1). CF(0) has three main subunits: a(1), b(2) and c(9-12). The alpha and beta chains form an alternating ring which encloses part of the gamma chain. CF(1) is attached to CF(0) by a central stalk formed by the gamma and epsilon chains, while a peripheral stalk is formed by the delta and b chains.

The protein localises to the cell membrane. The enzyme catalyses ATP + H2O + 4 H(+)(in) = ADP + phosphate + 5 H(+)(out). Functionally, produces ATP from ADP in the presence of a proton gradient across the membrane. The alpha chain is a regulatory subunit. The chain is ATP synthase subunit alpha from Kocuria rhizophila (strain ATCC 9341 / DSM 348 / NBRC 103217 / DC2201).